Reading from the N-terminus, the 87-residue chain is UPF0250 protein BUsg_472 (87 aa).

It belongs to the UPF0250 family.

This chain is UPF0250 protein BUsg_472, found in Buchnera aphidicola subsp. Schizaphis graminum (strain Sg).